A 510-amino-acid polypeptide reads, in one-letter code: NAD(P)H-quinone oxidoreductase subunit 2, chloroplastic (510 aa).

12 consecutive transmembrane segments (helical) span residues leucine 24 to leucine 44, tryptophan 59 to tryptophan 79, isoleucine 99 to isoleucine 119, methionine 124 to cysteine 144, leucine 149 to tyrosine 169, tyrosine 183 to glycine 203, isoleucine 229 to phenylalanine 249, tryptophan 295 to isoleucine 315, methionine 323 to aspartate 343, tyrosine 354 to leucine 374, alanine 395 to phenylalanine 415, and leucine 418 to leucine 438.

Belongs to the complex I subunit 2 family. In terms of assembly, NDH is composed of at least 16 different subunits, 5 of which are encoded in the nucleus.

Its subcellular location is the plastid. The protein resides in the chloroplast thylakoid membrane. The enzyme catalyses a plastoquinone + NADH + (n+1) H(+)(in) = a plastoquinol + NAD(+) + n H(+)(out). It catalyses the reaction a plastoquinone + NADPH + (n+1) H(+)(in) = a plastoquinol + NADP(+) + n H(+)(out). In terms of biological role, NDH shuttles electrons from NAD(P)H:plastoquinone, via FMN and iron-sulfur (Fe-S) centers, to quinones in the photosynthetic chain and possibly in a chloroplast respiratory chain. The immediate electron acceptor for the enzyme in this species is believed to be plastoquinone. Couples the redox reaction to proton translocation, and thus conserves the redox energy in a proton gradient. The sequence is that of NAD(P)H-quinone oxidoreductase subunit 2, chloroplastic from Ananas comosus (Pineapple).